We begin with the raw amino-acid sequence, 1088 residues long: RNA-directed RNA polymerase (1088 aa).

Positions Leu501–Ile687 constitute a RdRp catalytic domain.

Belongs to the reoviridae RNA-directed RNA polymerase family. In terms of assembly, interacts with VP3 (Potential). Interacts with VP2; this interaction activates VP1. Interacts with NSP5; this interaction is probably necessary for the formation of functional virus factories. Interacts with NSP2; this interaction is weak. It depends on Mg(2+) as a cofactor.

The protein resides in the virion. The catalysed reaction is RNA(n) + a ribonucleoside 5'-triphosphate = RNA(n+1) + diphosphate. RNA-directed RNA polymerase that is involved in both transcription and genome replication. Together with VP3 capping enzyme, forms an enzyme complex positioned near the channels situated at each of the five-fold vertices of the core. Following infection, the outermost layer of the virus is lost, leaving a double-layered particle (DLP) made up of the core and VP6 shell. VP1 then catalyzes the transcription of fully conservative plus-strand genomic RNAs that are extruded through the DLP's channels into the cytoplasm where they function as mRNAs for translation of viral proteins. One copy of each of the viral (+)RNAs is also recruited during core assembly, together with newly synthesized polymerase complexes and VP2. The polymerase of these novo-formed particles catalyzes the synthesis of complementary minus-strands leading to dsRNA formation. To do so, the polymerase specifically recognizes and binds 4 bases 5'-UGUG-3' in the conserved 3'-sequence of plus-strand RNA templates. VP2 presumably activates the autoinhibited VP1-RNA complex to coordinate packaging and genome replication. Once dsRNA synthesis is complete, the polymerase switches to the transcriptional mode, thus providing secondary transcription. The protein is RNA-directed RNA polymerase of Homo sapiens (Human).